The sequence spans 466 residues: Cysteine--tRNA ligase (466 aa).

Cys-30 is a Zn(2+) binding site. The 'HIGH' region signature appears at 32-42 (PTVYNYIHIGN). Positions 210, 235, and 239 each coordinate Zn(2+). Residues 267–271 (KMSKS) carry the 'KMSKS' region motif. Lys-270 serves as a coordination point for ATP. Position 271 is a phosphoserine (Ser-271).

It belongs to the class-I aminoacyl-tRNA synthetase family. Monomer. Requires Zn(2+) as cofactor.

It is found in the cytoplasm. It carries out the reaction tRNA(Cys) + L-cysteine + ATP = L-cysteinyl-tRNA(Cys) + AMP + diphosphate. This Geobacillus sp. (strain WCH70) protein is Cysteine--tRNA ligase.